The sequence spans 326 residues: ATP synthase gamma chain (326 aa).

The protein belongs to the ATPase gamma chain family. As to quaternary structure, F-type ATPases have 2 components, CF(1) - the catalytic core - and CF(0) - the membrane proton channel. CF(1) has five subunits: alpha(3), beta(3), gamma(1), delta(1), epsilon(1). CF(0) has three main subunits: a, b and c.

It is found in the cell membrane. Its function is as follows. Produces ATP from ADP in the presence of a proton gradient across the membrane. The gamma chain is believed to be important in regulating ATPase activity and the flow of protons through the CF(0) complex. The sequence is that of ATP synthase gamma chain from Corynebacterium efficiens (strain DSM 44549 / YS-314 / AJ 12310 / JCM 11189 / NBRC 100395).